The sequence spans 154 residues: UPF0225 protein SG1365 (154 aa).

The protein belongs to the UPF0225 family.

This chain is UPF0225 protein SG1365, found in Sodalis glossinidius (strain morsitans).